The sequence spans 106 residues: ATP-dependent Clp protease adapter protein ClpS (106 aa).

It belongs to the ClpS family. As to quaternary structure, binds to the N-terminal domain of the chaperone ClpA.

Functionally, involved in the modulation of the specificity of the ClpAP-mediated ATP-dependent protein degradation. The chain is ATP-dependent Clp protease adapter protein ClpS from Cronobacter sakazakii (strain ATCC BAA-894) (Enterobacter sakazakii).